The primary structure comprises 287 residues: Inorganic pyrophosphatase (287 aa).

A Phosphothreonine modification is found at Thr-65. Residue Arg-79 participates in diphosphate binding. Tyr-90 functions as the Proton donor in the catalytic mechanism. 3 residues coordinate Mg(2+): Asp-116, Asp-121, and Asp-153. Lys-239 is covalently cross-linked (Glycyl lysine isopeptide (Lys-Gly) (interchain with G-Cter in ubiquitin)). Position 251 is a phosphothreonine (Thr-251). Ser-266 carries the post-translational modification Phosphoserine. Residue Lys-279 forms a Glycyl lysine isopeptide (Lys-Gly) (interchain with G-Cter in ubiquitin) linkage. At Ser-286 the chain carries Phosphoserine.

The protein belongs to the PPase family. As to quaternary structure, homodimer. Mg(2+) serves as cofactor.

It localises to the cytoplasm. It carries out the reaction diphosphate + H2O = 2 phosphate + H(+). This chain is Inorganic pyrophosphatase (IPP1), found in Saccharomyces cerevisiae (strain ATCC 204508 / S288c) (Baker's yeast).